Here is a 276-residue protein sequence, read N- to C-terminus: Dermonecrotic toxin LlSicTox-alphaIV2iii (276 aa).

The active site involves H5. Mg(2+) contacts are provided by E25 and D27. The Nucleophile role is filled by H41. Disulfide bonds link C45–C51 and C47–C193. D85 contacts Mg(2+).

The protein belongs to the arthropod phospholipase D family. Class II subfamily. It depends on Mg(2+) as a cofactor. As to expression, expressed by the venom gland.

It is found in the secreted. It catalyses the reaction an N-(acyl)-sphingosylphosphocholine = an N-(acyl)-sphingosyl-1,3-cyclic phosphate + choline. It carries out the reaction an N-(acyl)-sphingosylphosphoethanolamine = an N-(acyl)-sphingosyl-1,3-cyclic phosphate + ethanolamine. The catalysed reaction is a 1-acyl-sn-glycero-3-phosphocholine = a 1-acyl-sn-glycero-2,3-cyclic phosphate + choline. The enzyme catalyses a 1-acyl-sn-glycero-3-phosphoethanolamine = a 1-acyl-sn-glycero-2,3-cyclic phosphate + ethanolamine. Functionally, dermonecrotic toxins cleave the phosphodiester linkage between the phosphate and headgroup of certain phospholipids (sphingolipid and lysolipid substrates), forming an alcohol (often choline) and a cyclic phosphate. This toxin acts on sphingomyelin (SM). It may also act on ceramide phosphoethanolamine (CPE), lysophosphatidylcholine (LPC) and lysophosphatidylethanolamine (LPE), but not on lysophosphatidylserine (LPS), and lysophosphatidylglycerol (LPG). It acts by transphosphatidylation, releasing exclusively cyclic phosphate products as second products. Induces dermonecrosis, hemolysis, increased vascular permeability, edema, inflammatory response, and platelet aggregation. This is Dermonecrotic toxin LlSicTox-alphaIV2iii from Loxosceles laeta (South American recluse spider).